The primary structure comprises 387 residues: 3-ketoacyl-CoA thiolase (387 aa).

Catalysis depends on Cys-91, which acts as the Acyl-thioester intermediate. Catalysis depends on proton acceptor residues His-343 and Cys-373.

The protein belongs to the thiolase-like superfamily. Thiolase family. Heterotetramer of two alpha chains (FadB) and two beta chains (FadA).

The protein resides in the cytoplasm. The catalysed reaction is an acyl-CoA + acetyl-CoA = a 3-oxoacyl-CoA + CoA. It functions in the pathway lipid metabolism; fatty acid beta-oxidation. Catalyzes the final step of fatty acid oxidation in which acetyl-CoA is released and the CoA ester of a fatty acid two carbons shorter is formed. The protein is 3-ketoacyl-CoA thiolase of Photobacterium profundum (strain SS9).